Here is a 3084-residue protein sequence, read N- to C-terminus: Highly reducing polyketide synthase sdnO (3084 aa).

Positions P4–K430 constitute a Ketosynthase family 3 (KS3) domain. Active-site for beta-ketoacyl synthase activity residues include C178, H313, and H353. The tract at residues F541–A841 is malonyl-CoA:ACP transacylase (MAT) domain. Residue S632 is the For malonyltransferase activity of the active site. Residues H931–S1071 are N-terminal hotdog fold. The segment at H931–F1243 is dehydratase (DH) domain. Residues H931–A1275 enclose the PKS/mFAS DH domain. H963 acts as the Proton acceptor; for dehydratase activity in catalysis. Residues L1099–A1275 form a C-terminal hotdog fold region. Residue D1177 is the Proton donor; for dehydratase activity of the active site. An enoylreductase (ER) domain region spans residues G1733–V2045. A catalytic ketoreductase (KRc) domain region spans residues A2069–E2252. A Carrier domain is found at D2363 to S2440. Position 2400 is an O-(pantetheine 4'-phosphoryl)serine (S2400). The disordered stretch occupies residues G2445–I2501. Polar residues predominate over residues N2456–S2481. The segment covering P2482–L2492 has biased composition (basic and acidic residues). The choline/carnitine acyltransferase domain stretch occupies residues H2864–G3084.

The protein operates within antibiotic biosynthesis. Functionally, highly reducing polyketide synthase; part of the gene cluster that mediates the biosynthesis of sordarin and hypoxysordarin, glycoside antibiotics with a unique tetracyclic diterpene aglycone structure. First, the geranylgeranyl diphosphate synthase sdnC constructs GGDP from farnesyl diphosphate and isopentenyl diphosphate. The diterpene cyclase sdnA then catalyzes the cyclization of GGDP to afford cycloaraneosene. Cycloaraneosene is then hydroxylated four times by the putative cytochrome P450 monooxygenases sdnB, sdnE, sdnF and sdnH to give a hydroxylated cycloaraneosene derivative such as cycloaraneosene-8,9,13,19-tetraol. Although the order of the hydroxylations is unclear, at least C8, C9 and C13 of the cycloaraneosene skeleton are hydroxylated before the sordaricin formation. Dehydration of the 13-hydroxy group of the hydroxylated cycloaraneosene derivative might be catalyzed by an unassigned hypothetical protein such as sdnG and sdnP to construct the cyclopentadiene moiety. The FAD-dependent oxidoreductase sdnN is proposed to catalyze the oxidation at C9 of the hydroxylated cycloaraneosene derivative and also catalyze the Baeyer-Villiger oxidation to give the lactone intermediate. The presumed lactone intermediate would be hydrolyzed to give an acrolein moiety and a carboxylate moiety. Then, [4+2]cycloaddition would occur between the acrolein moiety and the cyclopentadiene moiety to give sordaricin. SdnN might also be involved in the [4+2]cycloaddition after the hypothesized oxidation to accommodate the oxidized product and prompt the [4+2]cycloaddition. GDP-6-deoxy-D-altrose may be biosynthesized from GDP-D-mannose by the putative GDP-mannose-4,6-dehydratase sdnI and the short-chain dehydrogenase sdnK. The glycosyltransferase sdnJ catalyzes the attachment of 6-deoxy-D-altrose onto the 19-hydroxy group of sordaricin to give 4'-O-demethylsordarin. The methyltransferase sdnD would complete the biosynthesis of sordarin. Sordarin can be further modified into hypoxysordarin. The unique acyl chain at the 3'-hydroxy group of hypoxysordarin would be constructed by an iterative type I PKS sdnO and the trans-acting polyketide methyltransferase sdnL. SdnL would be responsible for the introduction of an alpha-methyl group of the polyketide chain. Alternatively, the putative beta-lactamase-like sdnR might be responsible for the cleavage and transfer of the polyketide chain from the PKS sdnO to sordarin. Two putative cytochrome P450 monooxygenases, sdnQ and sdnT, might catalyze the epoxidations of the polyketide chain to complete the biosynthesis of hypoxysordarin. Transcriptional regulators sdnM and sdnS are presumably encoded for the transcriptional regulation of the expression of the sdn gene cluster. In Sordaria araneosa (Pleurage araneosa), this protein is Highly reducing polyketide synthase sdnO.